Consider the following 388-residue polypeptide: Chorismate synthase (388 aa).

NADP(+) contacts are provided by arginine 39 and arginine 45. Positions 95 to 118 are disordered; that stretch reads EKNEKSRRVSRPRPGHADLVGGMK. Residues 130–132, 251–252, glycine 296, 311–315, and arginine 337 contribute to the FMN site; these read RSS, NA, and KPIPT.

The protein belongs to the chorismate synthase family. Homotetramer. Requires FMNH2 as cofactor.

It carries out the reaction 5-O-(1-carboxyvinyl)-3-phosphoshikimate = chorismate + phosphate. It functions in the pathway metabolic intermediate biosynthesis; chorismate biosynthesis; chorismate from D-erythrose 4-phosphate and phosphoenolpyruvate: step 7/7. In terms of biological role, catalyzes the anti-1,4-elimination of the C-3 phosphate and the C-6 proR hydrogen from 5-enolpyruvylshikimate-3-phosphate (EPSP) to yield chorismate, which is the branch point compound that serves as the starting substrate for the three terminal pathways of aromatic amino acid biosynthesis. This reaction introduces a second double bond into the aromatic ring system. The chain is Chorismate synthase from Listeria innocua serovar 6a (strain ATCC BAA-680 / CLIP 11262).